Reading from the N-terminus, the 296-residue chain is Ribosomal RNA small subunit methyltransferase H (296 aa).

S-adenosyl-L-methionine contacts are provided by residues 38-40 (GAH), Glu57, Phe80, Asp103, and His110.

The protein belongs to the methyltransferase superfamily. RsmH family.

The protein resides in the cytoplasm. It catalyses the reaction cytidine(1402) in 16S rRNA + S-adenosyl-L-methionine = N(4)-methylcytidine(1402) in 16S rRNA + S-adenosyl-L-homocysteine + H(+). Specifically methylates the N4 position of cytidine in position 1402 (C1402) of 16S rRNA. This is Ribosomal RNA small subunit methyltransferase H from Borrelia garinii subsp. bavariensis (strain ATCC BAA-2496 / DSM 23469 / PBi) (Borreliella bavariensis).